The chain runs to 361 residues: MSKRAFNFCAGPAALPTAVLQRAQAEMLDWQGKGLSVMEMSHRSDEYVAIASQAEQDLRDLLAVPNDYKVLFLQGGASQQFAEIPLNLLPEDGVADYVETGIWSKKAIEEARRYGAINVAASAKSYDYFAIPGQNDWQLSKNAAYVHYCSNETIGGLQFDWVPQTGDIPLVVDMSSDILSRPIDVSQFGLIYAGAQKNIGPSGLVVVIVREDLLGRARSSCPTMLDYKISADNGSMYNTPATYSWYLSGLVFQWLKEQGGVEAMERINRAKKDLLYKAIDGSDFYSNPIAHNARSWMNVPFRLADEKLDKAFLAGADERGLLNLKGHRSVGGMRASIYNAVGLDAVEALVAYMAEFEKEHA.

Arg-43 contributes to the L-glutamate binding site. Pyridoxal 5'-phosphate contacts are provided by residues 77–78 (AS), Trp-103, Thr-153, Asp-173, and Gln-196. Lys-197 is subject to N6-(pyridoxal phosphate)lysine. 238–239 (NT) lines the pyridoxal 5'-phosphate pocket.

The protein belongs to the class-V pyridoxal-phosphate-dependent aminotransferase family. SerC subfamily. As to quaternary structure, homodimer. Pyridoxal 5'-phosphate serves as cofactor.

The protein localises to the cytoplasm. It carries out the reaction O-phospho-L-serine + 2-oxoglutarate = 3-phosphooxypyruvate + L-glutamate. The catalysed reaction is 4-(phosphooxy)-L-threonine + 2-oxoglutarate = (R)-3-hydroxy-2-oxo-4-phosphooxybutanoate + L-glutamate. The protein operates within amino-acid biosynthesis; L-serine biosynthesis; L-serine from 3-phospho-D-glycerate: step 2/3. It participates in cofactor biosynthesis; pyridoxine 5'-phosphate biosynthesis; pyridoxine 5'-phosphate from D-erythrose 4-phosphate: step 3/5. Its function is as follows. Catalyzes the reversible conversion of 3-phosphohydroxypyruvate to phosphoserine and of 3-hydroxy-2-oxo-4-phosphonooxybutanoate to phosphohydroxythreonine. The protein is Phosphoserine aminotransferase of Ectopseudomonas mendocina (strain ymp) (Pseudomonas mendocina).